We begin with the raw amino-acid sequence, 127 residues long: Glycine cleavage system H protein 1 (127 aa).

Residues 20 to 101 enclose the Lipoyl-binding domain; it reads SVTVGITAYA…MGEGWFFRFI (82 aa). Residue lysine 60 is modified to N6-lipoyllysine.

This sequence belongs to the GcvH family. The glycine cleavage system is composed of four proteins: P, T, L and H. The cofactor is (R)-lipoate.

In terms of biological role, the glycine cleavage system catalyzes the degradation of glycine. The H protein shuttles the methylamine group of glycine from the P protein to the T protein. This chain is Glycine cleavage system H protein 1, found in Pseudomonas putida (strain ATCC 47054 / DSM 6125 / CFBP 8728 / NCIMB 11950 / KT2440).